The following is an 879-amino-acid chain: Phosphoenolpyruvate carboxylase (879 aa).

Active-site residues include His-138 and Lys-545.

It belongs to the PEPCase type 1 family. The cofactor is Mg(2+).

The catalysed reaction is oxaloacetate + phosphate = phosphoenolpyruvate + hydrogencarbonate. Functionally, forms oxaloacetate, a four-carbon dicarboxylic acid source for the tricarboxylic acid cycle. This Actinobacillus pleuropneumoniae serotype 5b (strain L20) protein is Phosphoenolpyruvate carboxylase.